Reading from the N-terminus, the 244-residue chain is Putative membrane peptidase YdiL (244 aa).

6 helical membrane-spanning segments follow: residues 7–27 (FIIL…PLLF), 44–64 (AQGL…LLIL), 80–100 (IGLS…SQGI), 127–147 (AVPL…EIIF), 159–179 (TNFF…HADL), and 202–222 (IWVP…MQLE). Catalysis depends on proton donor/acceptor residues Glu-143 and His-176.

It belongs to the peptidase U48 family.

The protein resides in the cell membrane. Functionally, may function as endopeptidase which proteolytically removes the C-terminal three residues of farnesylated peptides containing the CAAX motif where C is cysteine, A is an aliphatic amino acid and X is any amino acid. This chain is Putative membrane peptidase YdiL (ydiL), found in Bacillus subtilis (strain 168).